We begin with the raw amino-acid sequence, 375 residues long: All-trans-retinol dehydrogenase [NAD(+)] ADH1B (375 aa).

N-acetylserine is present on Ser2. Ser23 is subject to Phosphoserine. Tyr35 is subject to Phosphotyrosine. Residues Cys47, His68, Cys98, Cys101, Cys104, Cys112, and Cys175 each contribute to the Zn(2+) site. NAD(+) contacts are provided by residues 200 to 205, Asp224, Lys229, 293 to 295, and Arg370; these read GLGGVG and VGV.

This sequence belongs to the zinc-containing alcohol dehydrogenase family. Homodimer or heterodimer of closely related subunits. Requires Zn(2+) as cofactor.

Its subcellular location is the cytoplasm. It catalyses the reaction all-trans-retinol + NAD(+) = all-trans-retinal + NADH + H(+). It carries out the reaction all-trans-4-hydroxyretinol + NAD(+) = all-trans-4-hydroxyretinal + NADH + H(+). The catalysed reaction is all-trans-4-oxoretinol + NAD(+) = all-trans-4-oxoretinal + NADH + H(+). In terms of biological role, catalyzes the NAD-dependent oxidation of all-trans-retinol and its derivatives such as all-trans-4-hydroxyretinol and may participate in retinoid metabolism. In vitro can also catalyze the NADH-dependent reduction of all-trans-retinal and its derivatives such as all-trans-4-oxoretinal. Catalyzes in the oxidative direction with higher efficiency. Has the same affinity for all-trans-4-hydroxyretinol and all-trans-4-oxoretinal. The chain is All-trans-retinol dehydrogenase [NAD(+)] ADH1B from Pan troglodytes (Chimpanzee).